The primary structure comprises 220 residues: Translation initiation factor IF-3 (220 aa).

A disordered region spans residues 182-220; the sequence is TPLVKKDDKEEPATRAVRTITAPPRPTSARLASKPAGNG. Residues 185–194 show a composition bias toward basic and acidic residues; sequence VKKDDKEEPA.

This sequence belongs to the IF-3 family. Monomer.

It localises to the cytoplasm. In terms of biological role, IF-3 binds to the 30S ribosomal subunit and shifts the equilibrium between 70S ribosomes and their 50S and 30S subunits in favor of the free subunits, thus enhancing the availability of 30S subunits on which protein synthesis initiation begins. This chain is Translation initiation factor IF-3, found in Synechococcus sp. (strain WH7803).